A 273-amino-acid chain; its full sequence is Ribosomal RNA small subunit methyltransferase A (273 aa).

Residues N18, L20, G45, E66, D91, and N113 each contribute to the S-adenosyl-L-methionine site.

The protein belongs to the class I-like SAM-binding methyltransferase superfamily. rRNA adenine N(6)-methyltransferase family. RsmA subfamily.

It is found in the cytoplasm. It carries out the reaction adenosine(1518)/adenosine(1519) in 16S rRNA + 4 S-adenosyl-L-methionine = N(6)-dimethyladenosine(1518)/N(6)-dimethyladenosine(1519) in 16S rRNA + 4 S-adenosyl-L-homocysteine + 4 H(+). In terms of biological role, specifically dimethylates two adjacent adenosines (A1518 and A1519) in the loop of a conserved hairpin near the 3'-end of 16S rRNA in the 30S particle. May play a critical role in biogenesis of 30S subunits. This is Ribosomal RNA small subunit methyltransferase A from Escherichia coli (strain SE11).